The following is a 115-amino-acid chain: MKFVLLFGVLLVALFSYSSAEMLDDFGQADEDELLSLIEKEEARAKECTPRFYDCSHDRHSCCRSELFKDVCTCFYPEGGDNEVCTCQQPKHLKYMEKAAGKAKKFGGKIKKWFG.

An N-terminal signal peptide occupies residues 1-20 (MKFVLLFGVLLVALFSYSSA). The propeptide occupies 21 to 44 (EMLDDFGQADEDELLSLIEKEEAR). Intrachain disulfides connect cysteine 48–cysteine 63, cysteine 55–cysteine 72, cysteine 62–cysteine 87, and cysteine 74–cysteine 85.

This sequence belongs to the neurotoxin 19 (CSTX) family. 01 subfamily. Expressed by the venom gland.

It localises to the secreted. This chain is U3-lycotoxin-Ls1k, found in Lycosa singoriensis (Wolf spider).